Consider the following 2130-residue polypeptide: DNA polymerase zeta catalytic subunit (2130 aa).

Disordered stretches follow at residues 528–635 (PAES…TGTL), 734–891 (GCEI…HDEA), 927–954 (FTPS…SNTP), and 1189–1243 (QAKD…SAAQ). The span at 553 to 574 (TPIKSISSKSKSSPSKTPTTPI) shows a compositional bias: low complexity. A compositionally biased stretch (polar residues) spans 620–629 (PRLSLQLDQG). Residues 735-753 (CEIERPHRSEGSALDELKP) show a composition bias toward basic and acidic residues. Composition is skewed to polar residues over residues 771-786 (SEIQ…TSLD), 794-808 (LSQS…SMNG), and 818-835 (DSSS…SVSE). Residues 840–860 (LESKPKKSDETARSCDEKLQR) show a composition bias toward basic and acidic residues. Positions 938–954 (TETTPQLSPKSNESNTP) are enriched in polar residues. Low complexity predominate over residues 1228 to 1243 (PSSQSSEQSVSSSAAQ). Zn(2+) contacts are provided by cysteine 2041, cysteine 2045, cysteine 2054, and cysteine 2057. Residues cysteine 2086, cysteine 2089, cysteine 2098, and cysteine 2103 each contribute to the [4Fe-4S] cluster site. A CysB motif motif is present at residues 2086–2103 (CQACCGRLGSLQCDSLDC).

It belongs to the DNA polymerase type-B family. Catalytic subunit of the zeta DNA polymerase complex, which consists of PolZ1/DNApol-zeta and the accessory component PolZ2/Rev7. Interacts with the apurinic/apyrimidinic (AP) endonuclease Rrp1; the interaction is likely indirect and mediated via PolZ2. [4Fe-4S] cluster serves as cofactor.

The catalysed reaction is DNA(n) + a 2'-deoxyribonucleoside 5'-triphosphate = DNA(n+1) + diphosphate. Its activity is regulated as follows. Inhibited by tetracyclic diterpene antibiotic aphidicolin. Functionally, as the catalytic subunit of the DNA polymerase zeta complex, plays a crucial role in translesion DNA synthesis (TLS) and various DNA repair mechanisms. Lacks an intrinsic 3'-5' exonuclease activity and thus has no proofreading function. During homologous recombination (HR) repair, has a overlapping role with the error-prone translesion polymerase eta to initiate repair synthesis which is completed by end joining or another polymerase that can bind and reinitiate synthesis. May participate in the Rrp1-dependent base excision repair (BER) pathway responsible for repair of DNA lesions that gives rise to apurinic/apyrimidinic (AP) sites. Unlike mammalian orthologs, it is not an error-prone polymerase. This Drosophila melanogaster (Fruit fly) protein is DNA polymerase zeta catalytic subunit.